Reading from the N-terminus, the 421-residue chain is Expansin-like protein DDB_G0293186 (421 aa).

The signal sequence occupies residues 1 to 20 (MRTLKLIILLILSTFKTINS). N-linked (GlcNAc...) asparagine glycosylation occurs at asparagine 19. Residues 43–139 (GGQCGLPLPG…QKVSCGFSGY (97 aa)) form the Expansin-like EG45 domain. Disulfide bonds link cysteine 46/cysteine 70 and cysteine 73/cysteine 134. 2 N-linked (GlcNAc...) asparagine glycosylation sites follow: asparagine 117 and asparagine 391.

This sequence belongs to the expansin family. Expansin A subfamily.

It localises to the secreted. In terms of biological role, may serve to lubricate the movement of the cellulose microfibrils during cell growth and wall extension and/or may serve to maintain the fluid state of the slug cell wall. The chain is Expansin-like protein DDB_G0293186 from Dictyostelium discoideum (Social amoeba).